The primary structure comprises 5207 residues: E3 ubiquitin-protein ligase RNF213 (5207 aa).

Disordered regions lie at residues 1–20 (MECP…FCSQ) and 27–365 (PAAP…EADV). Polar residues predominate over residues 34-43 (SENNNSTMAS). The segment covering 89–100 (KKKKRKKKKKGN) has biased composition (basic residues). Low complexity-rich tracts occupy residues 101 to 117 (KSAS…PASP) and 136 to 157 (SQAQ…ATTP). The segment covering 188–197 (SEAQSSPQFQ) has biased composition (polar residues). A phosphoserine mark is found at Ser208 and Ser217. The segment covering 248–266 (GGSSEPGTELQTTEQQAGA) has biased composition (polar residues). Basic and acidic residues-rich tracts occupy residues 285–294 (AGKEMKEKTQ), 309–346 (HCQE…EGKN), and 353–362 (KNEKEQKNQE). Residues 343–374 (EGKNRSAAAVKNEKEQKNQEADVQEVKASTLS) adopt a coiled-coil conformation. A Glycyl lysine isopeptide (Lys-Gly) (interchain with G-Cter in SUMO2) cross-link involves residue Lys1151. Phosphoserine is present on Ser1258. Residues 1995–2000 (GVGKSL), Glu2098, Asp2155, and Arg2216 contribute to the ATP site. At Ser2273 the chain carries Phosphoserine. ATP-binding residues include Lys2499 and Ser2574. Cys3997, Cys4000, Cys4012, His4014, Cys4017, Cys4020, Cys4032, Cys4035, Cys4505, and His4509 together coordinate Zn(2+). The RING-type zinc-finger motif lies at 3997–4036 (CSICLGDAKDPVCLPCDHVHCLRCLRAWFASEQMICPYCL). The segment at 4483–4555 (MPEDLLAQAR…VKDKADRTQT (73 aa)) adopts an RZ-type zinc-finger fold. Cys4516 acts as the Nucleophile; for E3 ubiquitin-lipopolysaccharide ligase activity in catalysis. Positions 4525 and 4528 each coordinate Zn(2+).

The protein belongs to the AAA ATPase family. In terms of assembly, monomer. Interacts with UBE2L3/UBCH7; UBE2L3/UBCH7 is the most efficient ubiquitin-conjugating enzyme E2 for the ubiquitin ligase activity. Interacts with UBE2N/UBC13; promoting 'Lys-63'-linked ubiquitination of target proteins. (Microbial infection) Interacts with M.tuberculosis protein Rv3655c, which impairs caspase-8 activation and suppresses macrophage apoptosis by blocking the extrinsic pathway. In terms of processing, autoubiquitinated. Widely expressed (at protein level). As to expression, major isoform detected in all tissues examined. In terms of tissue distribution, minor isoform with restricted expression.

The protein resides in the cytoplasm. The protein localises to the cytosol. It is found in the lipid droplet. The enzyme catalyses S-ubiquitinyl-[E2 ubiquitin-conjugating enzyme]-L-cysteine + [acceptor protein]-L-lysine = [E2 ubiquitin-conjugating enzyme]-L-cysteine + N(6)-ubiquitinyl-[acceptor protein]-L-lysine.. It catalyses the reaction ATP + H2O = ADP + phosphate + H(+). Its pathway is protein modification; protein ubiquitination. Functionally, atypical E3 ubiquitin ligase that can catalyze ubiquitination of both proteins and lipids, and which is involved in various processes, such as lipid metabolism, angiogenesis and cell-autonomous immunity. Acts as a key immune sensor by catalyzing ubiquitination of the lipid A moiety of bacterial lipopolysaccharide (LPS) via its RZ-type zinc-finger: restricts the proliferation of cytosolic bacteria, such as Salmonella, by generating the bacterial ubiquitin coat through the ubiquitination of LPS. Also acts indirectly by mediating the recruitment of the LUBAC complex, which conjugates linear polyubiquitin chains. Ubiquitination of LPS triggers cell-autonomous immunity, such as antibacterial autophagy, leading to degradation of the microbial invader. Involved in lipid metabolism by regulating fat storage and lipid droplet formation; act by inhibiting the lipolytic process. Also regulates lipotoxicity by inhibiting desaturation of fatty acids. Also acts as an E3 ubiquitin-protein ligase via its RING-type zinc finger: mediates 'Lys-63'-linked ubiquitination of target proteins. Involved in the non-canonical Wnt signaling pathway in vascular development: acts by mediating ubiquitination and degradation of FLNA and NFATC2 downstream of RSPO3, leading to inhibit the non-canonical Wnt signaling pathway and promoting vessel regression. Also has ATPase activity; ATPase activity is required for ubiquitination of LPS. In Homo sapiens (Human), this protein is E3 ubiquitin-protein ligase RNF213.